The chain runs to 153 residues: Glutamyl-tRNA(Gln) amidotransferase subunit C, mitochondrial (153 aa).

Residues 31–55 form a disordered region; the sequence is HPTKVPQQPEPNAFPDLDNNTDDDP.

It belongs to the GatC family. As to quaternary structure, subunit of the heterotrimeric GatCAB amidotransferase (AdT) complex, composed of A, B and C subunits.

It is found in the mitochondrion. The catalysed reaction is L-glutamyl-tRNA(Gln) + L-glutamine + ATP + H2O = L-glutaminyl-tRNA(Gln) + L-glutamate + ADP + phosphate + H(+). Functionally, allows the formation of correctly charged Gln-tRNA(Gln) through the transamidation of misacylated Glu-tRNA(Gln) in the mitochondria. The reaction takes place in the presence of glutamine and ATP through an activated gamma-phospho-Glu-tRNA(Gln). This chain is Glutamyl-tRNA(Gln) amidotransferase subunit C, mitochondrial, found in Drosophila willistoni (Fruit fly).